Here is a 379-residue protein sequence, read N- to C-terminus: Putative 2-hydroxyacid dehydrogenase YGL185C (379 aa).

NAD(+) is bound by residues 207–208 (SI), 291–293 (LGR), and D317. R293 is an active-site residue. The active site involves E322. H341 acts as the Proton donor in catalysis. 341 to 344 (HLGS) lines the NAD(+) pocket.

Belongs to the D-isomer specific 2-hydroxyacid dehydrogenase family.

This chain is Putative 2-hydroxyacid dehydrogenase YGL185C, found in Saccharomyces cerevisiae (strain ATCC 204508 / S288c) (Baker's yeast).